The following is a 43-amino-acid chain: Parvalbumin beta (43 aa).

2 consecutive EF-hand domains span residues 1–20 and 22–43; these read KVFE…LKLF and LSSA…ALVK. Ca(2+)-binding residues include Asp7, Asp9, Ser11, Phe12, Glu14, Glu16, and Glu37.

As to expression, detected in muscle and cutaneous mucus. In the skin, detected in cells in the basal region of the glandular epithelium of the dermal mucus glands (at protein level).

Its subcellular location is the cytoplasm. The protein localises to the secreted. Its function is as follows. In muscle, parvalbumin is thought to be involved in relaxation after contraction. It binds two calcium ions. The polypeptide is Parvalbumin beta (Rana temporaria (European common frog)).